The chain runs to 220 residues: Large ribosomal subunit protein bL9 (220 aa).

Low complexity predominate over residues 167 to 184; that stretch reads AAAEVEQAEDVAAAEQQD. Residues 167–220 form a disordered region; sequence AAAEVEQAEDVAAAEQQDSSPVDDHADDADGVADGEGRDEGAGDASDEEEMPST. The span at 211-220 shows a compositional bias: acidic residues; it reads ASDEEEMPST.

The protein belongs to the bacterial ribosomal protein bL9 family.

In terms of biological role, binds to the 23S rRNA. In Anaplasma marginale (strain Florida), this protein is Large ribosomal subunit protein bL9.